The chain runs to 66 residues: Antitoxin RelB2 (66 aa).

Its function is as follows. Antitoxin component of a type II toxin-antitoxin (TA) system. Neutralizes the effect of cognate toxin RelE2, but no other RelE or ParE toxin. The polypeptide is Antitoxin RelB2 (relB2) (Caulobacter vibrioides (strain ATCC 19089 / CIP 103742 / CB 15) (Caulobacter crescentus)).